The chain runs to 333 residues: Uroporphyrinogen decarboxylase (333 aa).

Substrate contacts are provided by residues 21 to 25, Asp70, Tyr139, Ser194, and His309; that span reads RQVGR.

This sequence belongs to the uroporphyrinogen decarboxylase family. Homodimer.

It localises to the cytoplasm. The catalysed reaction is uroporphyrinogen III + 4 H(+) = coproporphyrinogen III + 4 CO2. It participates in porphyrin-containing compound metabolism; protoporphyrin-IX biosynthesis; coproporphyrinogen-III from 5-aminolevulinate: step 4/4. Functionally, catalyzes the decarboxylation of four acetate groups of uroporphyrinogen-III to yield coproporphyrinogen-III. The protein is Uroporphyrinogen decarboxylase of Chlamydia caviae (strain ATCC VR-813 / DSM 19441 / 03DC25 / GPIC) (Chlamydophila caviae).